The sequence spans 670 residues: MSTMIFMYFIYIVLYASGIAANLSYHVHEKRSIPVWWQRVSRIDPHAFLPLTIALAQQNLEHAEDYLLSVSDPSSPQYAQYWTAEAVAAKFAPSEPTARKVMSWLNQSGIAPAGVRRSKSGGELYMNITAQEAEKLLHTTFYIYKHQLTNKTLAICEKYSVATFVEKYVDFITTTEQFHHGLRRRSFQDPEPRMPSGKSPGHYVELADDSFPFPYLSFGSSVGLLKNKILSDSLPSNCDKLITPDCLRALYHIPVRNTSHPDNSLGIIEFTWVGYLESDLDKFFNIFQPSMVGNRPKFESIDGGFIQTLVPSFAFNGEADLDIEYAMALTHPLNITNYQVGDIWSLGNMNNFLASLDSTYCSAVDPVYDPIYPDPTPANPPLPSGYNSSDCGTHKPTKVISISYAYEEGEFSPAYERRQCLEYLKLGLQGVTVVFASGDHGTATRDGMCGNTVIDSNQISDHEPSYVPTFPSTCPYVTSVGGTQVPANGSVLDAEVAFDTIITSSDGNVSSRLTSAGGFSNVFAVPGYQATATRDYLQRLQNKYTLPVNLNVTGFGSGRGFPDVAANAAAYATAVNGKLVKVYGTSASAPVFASVIAWINDARLNMGKQPVGFVNPVLYANPQVLNDVAKGSNYDCANLPAYHASSGWDPVTGLGTPNFDRMLDLFLQLS.

The signal sequence occupies residues 1-20 (MSTMIFMYFIYIVLYASGIA). Positions 21–231 (ANLSYHVHEK…VGLLKNKILS (211 aa)) are cleaved as a propeptide — removed in mature form. Positions 241-669 (LITPDCLRAL…DRMLDLFLQL (429 aa)) constitute a Peptidase S53 domain. Catalysis depends on charge relay system residues Glu-318 and Asp-322. N-linked (GlcNAc...) asparagine glycosylation is found at Asn-334, Asn-387, Asn-488, Asn-508, and Asn-551. The active-site Charge relay system is Ser-586. Asp-627, Val-628, Gly-647, and Asp-649 together coordinate Ca(2+).

It depends on Ca(2+) as a cofactor.

It localises to the secreted. The protein resides in the extracellular space. The catalysed reaction is Release of an N-terminal tripeptide from a polypeptide.. Secreted tripeptidyl-peptidase which degrades proteins at acidic pHs and is involved in virulence. The chain is Tripeptidyl-peptidase SED1 (SED1) from Arthroderma otae (strain ATCC MYA-4605 / CBS 113480) (Microsporum canis).